Reading from the N-terminus, the 801-residue chain is Elongation factor G, mitochondrial (801 aa).

Residues 1–65 constitute a mitochondrion transit peptide; that stretch reads MRVQSLLRAQ…QKIQNQRRWQ (65 aa). Positions 100–387 constitute a tr-type G domain; the sequence is SRVRNIGIAA…AVCDYLPNPS (288 aa). Residues 109–116, 185–189, and 239–242 each bind GTP; these read AHIDSGKT, DTPGH, and NKMD.

Belongs to the TRAFAC class translation factor GTPase superfamily. Classic translation factor GTPase family. EF-G/EF-2 subfamily.

The protein localises to the mitochondrion. The protein operates within protein biosynthesis; polypeptide chain elongation. Functionally, mitochondrial GTPase that catalyzes the GTP-dependent ribosomal translocation step during translation elongation. During this step, the ribosome changes from the pre-translocational (PRE) to the post-translocational (POST) state as the newly formed A-site-bound peptidyl-tRNA and P-site-bound deacylated tRNA move to the P and E sites, respectively. Catalyzes the coordinated movement of the two tRNA molecules, the mRNA and conformational changes in the ribosome. This is Elongation factor G, mitochondrial (mef1) from Pyrenophora tritici-repentis (strain Pt-1C-BFP) (Wheat tan spot fungus).